The primary structure comprises 383 residues: 8-amino-7-oxononanoate synthase (383 aa).

Residue arginine 21 participates in substrate binding. Pyridoxal 5'-phosphate is bound at residue 108–109 (GY). Histidine 133 provides a ligand contact to substrate. Serine 179, histidine 207, and threonine 233 together coordinate pyridoxal 5'-phosphate. Lysine 236 carries the N6-(pyridoxal phosphate)lysine modification. Threonine 350 is a binding site for substrate.

It belongs to the class-II pyridoxal-phosphate-dependent aminotransferase family. BioF subfamily. Homodimer. It depends on pyridoxal 5'-phosphate as a cofactor.

It catalyses the reaction 6-carboxyhexanoyl-[ACP] + L-alanine + H(+) = (8S)-8-amino-7-oxononanoate + holo-[ACP] + CO2. It participates in cofactor biosynthesis; biotin biosynthesis. Its function is as follows. Catalyzes the decarboxylative condensation of pimeloyl-[acyl-carrier protein] and L-alanine to produce 8-amino-7-oxononanoate (AON), [acyl-carrier protein], and carbon dioxide. This Yersinia pseudotuberculosis serotype O:1b (strain IP 31758) protein is 8-amino-7-oxononanoate synthase.